We begin with the raw amino-acid sequence, 154 residues long: Ribosome maturation factor RimP (154 aa).

The protein belongs to the RimP family.

It is found in the cytoplasm. In terms of biological role, required for maturation of 30S ribosomal subunits. This Flavobacterium psychrophilum (strain ATCC 49511 / DSM 21280 / CIP 103535 / JIP02/86) protein is Ribosome maturation factor RimP.